The sequence spans 428 residues: ATP-dependent RNA helicase RhlB (428 aa).

The Q motif signature appears at lysine 9–alanine 37. The Helicase ATP-binding domain maps to leucine 40 to isoleucine 219. Alanine 53–threonine 60 contributes to the ATP binding site. The DEAD box signature appears at aspartate 165–aspartate 168. Positions arginine 245–leucine 390 constitute a Helicase C-terminal domain. Residues aspartate 392–glycine 428 are disordered. A compositionally biased stretch (basic residues) spans proline 396–leucine 413.

It belongs to the DEAD box helicase family. RhlB subfamily. In terms of assembly, component of the RNA degradosome, which is a multiprotein complex involved in RNA processing and mRNA degradation.

It localises to the cytoplasm. The catalysed reaction is ATP + H2O = ADP + phosphate + H(+). Functionally, DEAD-box RNA helicase involved in RNA degradation. Has RNA-dependent ATPase activity and unwinds double-stranded RNA. This Photorhabdus laumondii subsp. laumondii (strain DSM 15139 / CIP 105565 / TT01) (Photorhabdus luminescens subsp. laumondii) protein is ATP-dependent RNA helicase RhlB.